Reading from the N-terminus, the 300-residue chain is MNTKAMLETLNEITLLVDEPLKNVTFTKTGGPADVLALPKTKKEVEEIVAYCREQGLSWLVLGNASNLIVRDGGIRDVVIMLTEMKEIKVAGTTMIVDAGAKLIDTTYEALAADLTGFEFACGIPGSVGGAVYMNAGAYGGEIKDVFQSAEVLLADGTIQTMTKEDLNFRYRHSEIQELHCIVLQATFALEKGNHAEIKAQMDELTELRELKQPLEYPSCGSVFKRPVGHFTGKLIQDAGLQGLKWGGAQISEKHAGFIVNIDHATATDYVELIAHIQEVIKEKFDVELQTEVRIIGEEV.

The 166-residue stretch at 28 to 193 folds into the FAD-binding PCMH-type domain; that stretch reads KTGGPADVLA…LQATFALEKG (166 aa). The active site involves R172. The Proton donor role is filled by S222. E292 is a catalytic residue.

It belongs to the MurB family. Requires FAD as cofactor.

It localises to the cytoplasm. The catalysed reaction is UDP-N-acetyl-alpha-D-muramate + NADP(+) = UDP-N-acetyl-3-O-(1-carboxyvinyl)-alpha-D-glucosamine + NADPH + H(+). It participates in cell wall biogenesis; peptidoglycan biosynthesis. Cell wall formation. This Enterococcus faecalis (strain ATCC 700802 / V583) protein is UDP-N-acetylenolpyruvoylglucosamine reductase.